A 359-amino-acid chain; its full sequence is Protein-arginine kinase (359 aa).

One can recognise a Phosphagen kinase C-terminal domain in the interval 25–257 (IVISSRVRLA…QQVIEQERML (233 aa)). Residues 28 to 32 (SSRVR), H93, R128, 179 to 183 (RASLM), and 210 to 215 (RGIYGE) each bind ATP. An RDXXRA motif of the pArg binding pocket involved in allosteric regulation motif is present at residues 340–345 (RDAKRA).

The protein belongs to the ATP:guanido phosphotransferase family.

It carries out the reaction L-arginyl-[protein] + ATP = N(omega)-phospho-L-arginyl-[protein] + ADP + H(+). With respect to regulation, appears to be allosterically activated by the binding of pArg-containing polypeptides to the pArg-binding pocket localized in the C-terminal domain of McsB. Its function is as follows. Catalyzes the specific phosphorylation of arginine residues in proteins. The polypeptide is Protein-arginine kinase (Syntrophomonas wolfei subsp. wolfei (strain DSM 2245B / Goettingen)).